A 114-amino-acid chain; its full sequence is T cell receptor alpha variable 24 (114 aa).

Positions Met1–Ser22 are cleaved as a signal peptide. The Ig-like domain maps to Ile23–Phe114. Residue Asn42 is glycosylated (N-linked (GlcNAc...) asparagine). A disulfide bridge links Cys45 with Cys112.

In terms of assembly, alpha-beta TR is a heterodimer composed of an alpha and beta chain; disulfide-linked. The alpha-beta TR is associated with the transmembrane signaling CD3 coreceptor proteins to form the TR-CD3 (TcR or TCR). The assembly of alpha-beta TR heterodimers with CD3 occurs in the endoplasmic reticulum where a single alpha-beta TR heterodimer associates with one CD3D-CD3E heterodimer, one CD3G-CD3E heterodimer and one CD247 homodimer forming a stable octameric structure. CD3D-CD3E and CD3G-CD3E heterodimers preferentially associate with TR alpha and TR beta chains, respectively. The association of the CD247 homodimer is the last step of TcR assembly in the endoplasmic reticulum and is required for transport to the cell surface.

Its subcellular location is the cell membrane. In terms of biological role, v region of the variable domain of T cell receptor (TR) alpha chain that participates in the antigen recognition. Alpha-beta T cell receptors are antigen specific receptors which are essential to the immune response and are present on the cell surface of T lymphocytes. Recognize peptide-major histocompatibility (MH) (pMH) complexes that are displayed by antigen presenting cells (APC), a prerequisite for efficient T cell adaptive immunity against pathogens. Binding of alpha-beta TR to pMH complex initiates TR-CD3 clustering on the cell surface and intracellular activation of LCK that phosphorylates the ITAM motifs of CD3G, CD3D, CD3E and CD247 enabling the recruitment of ZAP70. In turn ZAP70 phosphorylates LAT, which recruits numerous signaling molecules to form the LAT signalosome. The LAT signalosome propagates signal branching to three major signaling pathways, the calcium, the mitogen-activated protein kinase (MAPK) kinase and the nuclear factor NF-kappa-B (NF-kB) pathways, leading to the mobilization of transcription factors that are critical for gene expression and essential for T cell growth and differentiation. The T cell repertoire is generated in the thymus, by V-(D)-J rearrangement. This repertoire is then shaped by intrathymic selection events to generate a peripheral T cell pool of self-MH restricted, non-autoaggressive T cells. Post-thymic interaction of alpha-beta TR with the pMH complexes shapes TR structural and functional avidity. This chain is T cell receptor alpha variable 24, found in Homo sapiens (Human).